A 278-amino-acid chain; its full sequence is 4-deoxy-L-threo-5-hexosulose-uronate ketol-isomerase (278 aa).

Zn(2+) is bound by residues histidine 196, histidine 198, glutamate 203, and histidine 245.

This sequence belongs to the KduI family. Zn(2+) is required as a cofactor.

It catalyses the reaction 5-dehydro-4-deoxy-D-glucuronate = 3-deoxy-D-glycero-2,5-hexodiulosonate. It participates in glycan metabolism; pectin degradation; 2-dehydro-3-deoxy-D-gluconate from pectin: step 4/5. Its function is as follows. Catalyzes the isomerization of 5-dehydro-4-deoxy-D-glucuronate to 3-deoxy-D-glycero-2,5-hexodiulosonate. This chain is 4-deoxy-L-threo-5-hexosulose-uronate ketol-isomerase, found in Pectobacterium carotovorum subsp. carotovorum (Erwinia carotovora subsp. carotovora).